The chain runs to 1222 residues: ATP-dependent helicase/nuclease subunit A (1222 aa).

Positions 39–495 (QKRTAQQIEA…ILLKENFRSQ (457 aa)) constitute a UvrD-like helicase ATP-binding domain. ATP is bound at residue 60-67 (ASAGSGKT). Residues 524-810 (QLIAGSHAQT…NLMTIHKSKG (287 aa)) form the UvrD-like helicase C-terminal domain.

The protein belongs to the helicase family. AddA subfamily. As to quaternary structure, heterodimer of AddA and AddB/RexB. Requires Mg(2+) as cofactor.

The catalysed reaction is Couples ATP hydrolysis with the unwinding of duplex DNA by translocating in the 3'-5' direction.. It catalyses the reaction ATP + H2O = ADP + phosphate + H(+). Functionally, the heterodimer acts as both an ATP-dependent DNA helicase and an ATP-dependent, dual-direction single-stranded exonuclease. Recognizes the chi site generating a DNA molecule suitable for the initiation of homologous recombination. The AddA nuclease domain is required for chi fragment generation; this subunit has the helicase and 3' -&gt; 5' nuclease activities. The sequence is that of ATP-dependent helicase/nuclease subunit A from Streptococcus pyogenes serotype M12 (strain MGAS2096).